The primary structure comprises 521 residues: MTQDKILILDFGSQVTQLIARRVREAHVYCELHSFDMPLDEIKAFNPKGIILSGGPNSVYESDYQADTGIFDLGIPVLGICYGMQFMAHHLGGEVQPGNQREFGYAQVKTIDSELTRGIQDGEPNTLDVWMSHGDKVSKLPDGFAVIGNTPSCPIAMMENAEKQFYGIQFHPEVTHTKQGRALLNRFVLDICGAQPGWTMPNYIEEAVAKIREQVGSDEVILGLSGGVDSSVAAALIHRAIGDQLTCVFVDHGLLRLNESKMVMDMFARNLGVKVIHVDAEGQFMAKLAGVTDPEKKRKIIGAEFIEVFDAEEKKLTNAKWLAQGTIYPDVIESAGAKTKKAHAIKSHHNVGGLPENMKLKLLEPLRDLFKDEVRELGVALGLPREMVYRHPFPGPGLGVRILGEVKKEYADLLRQADDIFIQELRNTTDENGTSWYDLTSQAFAVFLPVKSVGVMGDGRTYDYVIALRAVITSDFMTAHWAELPYSLLGKVSNRIINEVKGINRVVYDVSGKPPATIEWE.

In terms of domain architecture, Glutamine amidotransferase type-1 spans 5–197 (KILILDFGSQ…VLDICGAQPG (193 aa)). The Nucleophile role is filled by cysteine 81. Residues histidine 171 and glutamate 173 contribute to the active site. Positions 198-390 (WTMPNYIEEA…LGLPREMVYR (193 aa)) constitute a GMPS ATP-PPase domain. 225-231 (SGGVDSS) contacts ATP.

As to quaternary structure, homodimer.

The enzyme catalyses XMP + L-glutamine + ATP + H2O = GMP + L-glutamate + AMP + diphosphate + 2 H(+). Its pathway is purine metabolism; GMP biosynthesis; GMP from XMP (L-Gln route): step 1/1. Its function is as follows. Catalyzes the synthesis of GMP from XMP. This Neisseria meningitidis serogroup B (strain ATCC BAA-335 / MC58) protein is GMP synthase [glutamine-hydrolyzing] (guaA).